The primary structure comprises 206 residues: Glycerol-3-phosphate acyltransferase (206 aa).

5 helical membrane-spanning segments follow: residues Ile14–Leu34, Ala67–Leu87, Ala91–Phe111, Leu124–Phe144, and Tyr148–Gly168.

Belongs to the PlsY family. As to quaternary structure, probably interacts with PlsX.

The protein resides in the cell inner membrane. It catalyses the reaction an acyl phosphate + sn-glycerol 3-phosphate = a 1-acyl-sn-glycero-3-phosphate + phosphate. It participates in lipid metabolism; phospholipid metabolism. Functionally, catalyzes the transfer of an acyl group from acyl-phosphate (acyl-PO(4)) to glycerol-3-phosphate (G3P) to form lysophosphatidic acid (LPA). This enzyme utilizes acyl-phosphate as fatty acyl donor, but not acyl-CoA or acyl-ACP. The polypeptide is Glycerol-3-phosphate acyltransferase (Rhizobium etli (strain CIAT 652)).